The chain runs to 767 residues: Dipeptidyl peptidase 4 (767 aa).

The Cytoplasmic portion of the chain corresponds to 1-6; sequence MKTPWK. Residues 7–28 traverse the membrane as a helical; Signal-anchor for type II membrane protein segment; it reads VLLGLLGVAALVTIITVPVVLL. Topologically, residues 29-767 are extracellular; sequence NKDEAAADSR…HFLQQCFSLR (739 aa). N-linked (GlcNAc...) asparagine glycans are attached at residues N83, N90, N148, N217, N227, and N319. Cystine bridges form between C326–C337, C383–C395, C445–C448, and C455–C473. N521 carries N-linked (GlcNAc...) asparagine glycosylation. Catalysis depends on S631, which acts as the Charge relay system. C650 and C763 form a disulfide bridge. An N-linked (GlcNAc...) asparagine glycan is attached at N686. Active-site charge relay system residues include D709 and H741.

Belongs to the peptidase S9B family. DPPIV subfamily. As to quaternary structure, monomer. Homodimer. Heterodimer with Seprase (FAP). Requires homodimerization for optimal dipeptidyl peptidase activity and T-cell costimulation. Found in a membrane raft complex, at least composed of BCL10, CARD11, DPP4 and IKBKB. Associates with collagen. Interacts with PTPRC; the interaction is enhanced in an interleukin-12-dependent manner in activated lymphocytes. Interacts (via extracellular domain) with ADA; does not inhibit its dipeptidyl peptidase activity. Interacts with CAV1 (via the N-terminus); the interaction is direct. Interacts (via cytoplasmic tail) with CARD11 (via PDZ domain); its homodimerization is necessary for interaction with CARD11. Interacts with IGF2R; the interaction is direct. Interacts with GPC3. Post-translationally, the soluble form (Dipeptidyl peptidase 4 soluble form also named SDPP) derives from the membrane form (Dipeptidyl peptidase 4 membrane form also named MDPP) by proteolytic processing. In terms of processing, N- and O-Glycosylated. Phosphorylated. Mannose 6-phosphate residues in the carbohydrate moiety are necessary for interaction with IGF2R in activated T-cells. Mannose 6-phosphorylation is induced during T-cell activation. In terms of tissue distribution, expressed in bile ducts and other epithelial brush borders (small intestine, kidney, colon, pancreatic duct); acinar structures in salivary glands; endothelial structures and T cell areas in thymus, spleen and lymph node.

It is found in the secreted. It localises to the cell membrane. Its subcellular location is the apical cell membrane. The protein resides in the cell projection. The protein localises to the invadopodium membrane. It is found in the lamellipodium membrane. It localises to the cell junction. Its subcellular location is the membrane raft. It carries out the reaction Release of an N-terminal dipeptide, Xaa-Yaa-|-Zaa-, from a polypeptide, preferentially when Yaa is Pro, provided Zaa is neither Pro nor hydroxyproline.. With respect to regulation, inhibited by GPC3 and diprotin A. Functionally, cell surface glycoprotein receptor involved in the costimulatory signal essential for T-cell receptor (TCR)-mediated T-cell activation. Acts as a positive regulator of T-cell coactivation, by binding at least ADA, CAV1, IGF2R, and PTPRC. Its binding to CAV1 and CARD11 induces T-cell proliferation and NF-kappa-B activation in a T-cell receptor/CD3-dependent manner. Its interaction with ADA also regulates lymphocyte-epithelial cell adhesion. In association with FAP is involved in the pericellular proteolysis of the extracellular matrix (ECM), the migration and invasion of endothelial cells into the ECM. May be involved in the promotion of lymphatic endothelial cells adhesion, migration and tube formation. When overexpressed, enhanced cell proliferation, a process inhibited by GPC3. Also acts as a serine exopeptidase with a dipeptidyl peptidase activity that regulates various physiological processes by cleaving peptides in the circulation, including many chemokines, mitogenic growth factors, neuropeptides and peptide hormones. Removes N-terminal dipeptides sequentially from polypeptides having unsubstituted N-termini provided that the penultimate residue is proline. In Rattus norvegicus (Rat), this protein is Dipeptidyl peptidase 4 (Dpp4).